Reading from the N-terminus, the 429-residue chain is GTPase Obg (429 aa).

Positions 1-158 (MFVDQVKIYV…RNVQLELKVL (158 aa)) constitute an Obg domain. The tract at residues 124–145 (RGNKRFATPANPAPELSENGEP) is disordered. Residues 159-329 (ADVGLVGFPS…LLLAIADKLE (171 aa)) enclose the OBG-type G domain. Residues 165–172 (GFPSVGKS), 190–194 (FTTIV), 212–215 (DLPG), 282–285 (NKMD), and 310–312 (SAV) each bind GTP. Ser172 and Thr192 together coordinate Mg(2+). Residues 351 to 429 (KYVAEEPDFE…LLDYEFEFMD (79 aa)) enclose the OCT domain.

It belongs to the TRAFAC class OBG-HflX-like GTPase superfamily. OBG GTPase family. As to quaternary structure, monomer. It depends on Mg(2+) as a cofactor.

It is found in the cytoplasm. In terms of biological role, an essential GTPase which binds GTP, GDP and possibly (p)ppGpp with moderate affinity, with high nucleotide exchange rates and a fairly low GTP hydrolysis rate. Plays a role in control of the cell cycle, stress response, ribosome biogenesis and in those bacteria that undergo differentiation, in morphogenesis control. This is GTPase Obg from Listeria innocua serovar 6a (strain ATCC BAA-680 / CLIP 11262).